The primary structure comprises 249 residues: Probable cobalt-factor III C(17)-methyltransferase (249 aa).

The protein belongs to the precorrin methyltransferase family.

It catalyses the reaction Co(II)-factor III + S-adenosyl-L-methionine + H(+) = Co(II)-factor IV + S-adenosyl-L-homocysteine. The protein operates within cofactor biosynthesis; adenosylcobalamin biosynthesis; cob(II)yrinate a,c-diamide from sirohydrochlorin (anaerobic route): step 3/10. Methyltransferase that likely catalyzes the ring contraction and methylation of C-17 in cobalt-factor III to form cobalt-factor IV. May also convert cobalt-precorrin-3 to cobalt-precorrin-4. This is Probable cobalt-factor III C(17)-methyltransferase (cbiH) from Methanocaldococcus jannaschii (strain ATCC 43067 / DSM 2661 / JAL-1 / JCM 10045 / NBRC 100440) (Methanococcus jannaschii).